Consider the following 133-residue polypeptide: Large ribosomal subunit protein uL16c (133 aa).

Belongs to the universal ribosomal protein uL16 family. As to quaternary structure, part of the 50S ribosomal subunit.

The protein resides in the plastid. The sequence is that of Large ribosomal subunit protein uL16c from Euglena longa (Euglenophycean alga).